A 209-amino-acid chain; its full sequence is N-(5'-phosphoribosyl)anthranilate isomerase (209 aa).

This sequence belongs to the TrpF family.

The enzyme catalyses N-(5-phospho-beta-D-ribosyl)anthranilate = 1-(2-carboxyphenylamino)-1-deoxy-D-ribulose 5-phosphate. It participates in amino-acid biosynthesis; L-tryptophan biosynthesis; L-tryptophan from chorismate: step 3/5. The chain is N-(5'-phosphoribosyl)anthranilate isomerase from Pelobacter propionicus (strain DSM 2379 / NBRC 103807 / OttBd1).